A 286-amino-acid chain; its full sequence is Pantothenate synthetase (286 aa).

An ATP-binding site is contributed by 31–38; it reads MGALHDGH. Catalysis depends on H38, which acts as the Proton donor. Q62 is a (R)-pantoate binding site. Q62 is a beta-alanine binding site. ATP is bound at residue 148-151; the sequence is GKKD. Q154 contacts (R)-pantoate. ATP is bound by residues V177 and 185–188; that span reads KSSR.

Belongs to the pantothenate synthetase family. Homodimer.

The protein resides in the cytoplasm. It catalyses the reaction (R)-pantoate + beta-alanine + ATP = (R)-pantothenate + AMP + diphosphate + H(+). Its pathway is cofactor biosynthesis; (R)-pantothenate biosynthesis; (R)-pantothenate from (R)-pantoate and beta-alanine: step 1/1. In terms of biological role, catalyzes the condensation of pantoate with beta-alanine in an ATP-dependent reaction via a pantoyl-adenylate intermediate. The polypeptide is Pantothenate synthetase (Staphylococcus carnosus (strain TM300)).